The sequence spans 207 residues: Coiled-coil domain-containing protein 124 homolog (207 aa).

The disordered stretch occupies residues 1–90 (MGNPKKRAEK…KAAKKNSSLD (90 aa)). The stretch at 5 to 71 (KKRAEKAEAA…RLEKEEMESL (67 aa)) forms a coiled coil. Basic and acidic residues-rich tracts occupy residues 9–28 (EKAE…KKDA) and 41–65 (NKKE…RLEK).

Belongs to the CCDC124 family. As to quaternary structure, associates with translationally inactive ribosomes in the nonrotated state.

The protein localises to the cytoplasm. It localises to the nucleus. Its function is as follows. Ribosome-binding protein involved in ribosome hibernation by associating with translationally inactive ribosomes. Required for translational recovery after starvation from stationary phase. May facilitate rapid translation reactivation by stabilizing the recycling-competent state of inactive ribosomes. This Schizosaccharomyces pombe (strain 972 / ATCC 24843) (Fission yeast) protein is Coiled-coil domain-containing protein 124 homolog.